We begin with the raw amino-acid sequence, 111 residues long: UPF0125 protein SO_1475 (111 aa).

The disordered stretch occupies residues 88–111 (VRRRRADKAKDEGRANKVTGGRVS).

Belongs to the UPF0125 (RnfH) family.

The polypeptide is UPF0125 protein SO_1475 (Shewanella oneidensis (strain ATCC 700550 / JCM 31522 / CIP 106686 / LMG 19005 / NCIMB 14063 / MR-1)).